We begin with the raw amino-acid sequence, 184 residues long: Photosystem I assembly protein Ycf4 (184 aa).

2 helical membrane-spanning segments follow: residues 19–39 (ISNLCWAFILFLGSLGFFLVG) and 57–77 (IIFFPQGIVMSFYGIAGLFIS).

Belongs to the Ycf4 family.

The protein resides in the plastid thylakoid membrane. Its function is as follows. Seems to be required for the assembly of the photosystem I complex. This is Photosystem I assembly protein Ycf4 from Cuscuta exaltata (Tall dodder).